The following is a 388-amino-acid chain: Phosphoglycerate kinase (388 aa).

Residues 24–26 (DLN), Arg37, 56–59 (RGGR), Arg117, and Arg165 each bind substrate. The interval 26-136 (NVPLDSDGEQ…RRPRNVQGRR (111 aa)) is disordered. A compositionally biased stretch (basic and acidic residues) spans 34–55 (EQGRITDPGPDHRVGADVERTG). Over residues 102–136 (GGHRRPGPRRGVDRRRRPAAGKHPVRRPRNVQGRR) the composition is skewed to basic residues. ATP-binding positions include Lys215, Gly303, Glu334, and 363-366 (GGDS).

This sequence belongs to the phosphoglycerate kinase family. In terms of assembly, monomer.

The protein resides in the cytoplasm. The catalysed reaction is (2R)-3-phosphoglycerate + ATP = (2R)-3-phospho-glyceroyl phosphate + ADP. It functions in the pathway carbohydrate degradation; glycolysis; pyruvate from D-glyceraldehyde 3-phosphate: step 2/5. This Mycobacterium avium protein is Phosphoglycerate kinase (pgk).